The following is a 318-amino-acid chain: Thymidylate synthase (318 aa).

DUMP-binding positions include Arg25 and 180–181 (RR). The active-site Nucleophile is the Cys200. DUMP contacts are provided by residues 220–223 (RSAD), Asn231, and 261–263 (HIY). Position 223 (Asp223) interacts with (6R)-5,10-methylene-5,6,7,8-tetrahydrofolate. (6R)-5,10-methylene-5,6,7,8-tetrahydrofolate is bound at residue Ala317.

It belongs to the thymidylate synthase family. Bacterial-type ThyA subfamily. Homodimer.

The protein localises to the cytoplasm. The catalysed reaction is dUMP + (6R)-5,10-methylene-5,6,7,8-tetrahydrofolate = 7,8-dihydrofolate + dTMP. It participates in pyrimidine metabolism; dTTP biosynthesis. In terms of biological role, catalyzes the reductive methylation of 2'-deoxyuridine-5'-monophosphate (dUMP) to 2'-deoxythymidine-5'-monophosphate (dTMP) while utilizing 5,10-methylenetetrahydrofolate (mTHF) as the methyl donor and reductant in the reaction, yielding dihydrofolate (DHF) as a by-product. This enzymatic reaction provides an intracellular de novo source of dTMP, an essential precursor for DNA biosynthesis. This Ligilactobacillus salivarius (strain UCC118) (Lactobacillus salivarius) protein is Thymidylate synthase.